Consider the following 883-residue polypeptide: Glutamate receptor 2 (883 aa).

Positions 1 to 24 (MQKIMHISVLLSPVLWGLIFGVSS) are cleaved as a signal peptide. Residues 25–543 (NSIQIGGLFP…GVFSFLDPLA (519 aa)) lie on the Extracellular side of the membrane. Cysteine 78 and cysteine 330 form a disulfide bridge. Residues asparagine 256, asparagine 370, asparagine 406, and asparagine 413 are each glycosylated (N-linked (GlcNAc...) asparagine). 3 residues coordinate L-glutamate: proline 499, threonine 501, and arginine 506. The chain crosses the membrane as a helical span at residues 544 to 564 (YEIWMCIVFAYIGVSVVLFLV). The Cytoplasmic portion of the chain corresponds to 565 to 591 (SRFSPYEWHTEEFEDGRETQSSESTNE). Residues 592-607 (FGIFNSLWFSLGAFMQ) constitute an intramembrane region (helical; Pore-forming). The stretch at 608 to 610 (QGC) is an intramembrane region. The S-palmitoyl cysteine moiety is linked to residue cysteine 610. Residues 611 to 616 (DISPRS) are Cytoplasmic-facing. A helical transmembrane segment spans residues 617-637 (LSGRIVGGVWWFFTLIIISSY). At 638 to 812 (TANLAAFLTV…EKTSALSLSN (175 aa)) the chain is on the extracellular side. Positions 675 and 676 each coordinate L-glutamate. Phosphoserine; by PKC is present on serine 683. A Phosphoserine; by PKG modification is found at serine 717. Glutamate 726 contacts L-glutamate. An intrachain disulfide couples cysteine 739 to cysteine 794. The helical transmembrane segment at 813–833 (VAGVFYILVGGLGLAMLVALI) threads the bilayer. At 834–883 (EFCYKSRAEAKRMKVAKNAQNINPSSSQNSQNFATYKEGYNVYGIESVKI) the chain is on the cytoplasmic side. Cysteine 836 carries S-palmitoyl cysteine lipidation. A phosphoserine mark is found at serine 860 and serine 863. The interval 867-877 (ATYKEGYNVYG) is required for interaction with IQSEC1. At tyrosine 876 the chain carries Phosphotyrosine. Serine 880 carries the post-translational modification Phosphoserine.

It belongs to the glutamate-gated ion channel (TC 1.A.10.1) family. GRIA2 subfamily. Homotetramer or heterotetramer of pore-forming glutamate receptor subunits. Tetramers may be formed by the dimerization of dimers. May interact with MPP4. Forms a ternary complex with GRIP1 and CSPG4. Interacts with ATAD1 in an ATP-dependent manner. ATAD1-catalyzed ATP hydrolysis disrupts binding to ATAD1 and to GRIP1 and leads to AMPAR complex disassembly. Interacts with GRIP1 and GRIP2. Interacts with NSF via its C-terminus. Isoform 1, but not isoform 3, interacts with PICK1. Interacts with CACNG2. Interacts with GRIA1 and SYNDIG1. Part of a complex containing GRIA2, NSF and NAPA and/or NAPB. Interacts with SNX27 (via PDZ domain); the interaction is required for recycling to the plasma membrane when endocytosed and prevent degradation in lysosomes. Interacts with LRFN1. Found in a complex with GRIA1, GRIA3, GRIA4, CNIH2, CNIH3, CACNG2, CACNG3, CACNG4, CACNG5, CACNG7 and CACNG8. Interacts with CACNG5. Interacts with OLFM2. Interacts with AP4B1, AP4E1 and AP4M1; probably indirect it mediates the somatodendritic localization of GRIA2 in neurons. Forms a complex with GRIP1, NSG1 and STX12; controls the intracellular fate of AMPAR and the endosomal sorting of the GRIA2 subunit toward recycling and membrane targeting. Interacts with IQSEC1; the interaction is required for ARF6 activation. Interacts (heterotetramer form) with CNIH2 and CNIH3; this interaction promotes expression at the plasma membrane and extensively modulates their gating properties by slowing deactivation and desensitization kinetics. Post-translationally, palmitoylated. Depalmitoylated upon L-glutamate stimulation. ZDHHC3/GODZ specifically palmitoylates Cys-610, which leads to Golgi retention and decreased cell surface expression. In contrast, Cys-836 palmitoylation does not affect cell surface expression but regulates stimulation-dependent endocytosis. In terms of processing, N-glycosylated. Ubiquitinated by RNF167, leading to its degradation. Post-translationally, phosphorylation at Tyr-876 is required for interaction with IQSEC1 and ARF6 activation, which in turn triggers AMPAR internalization for persistent synaptic depression. Detected in brain cortex, hippocampus and cerebellum (at protein level). Detected in hippocampus.

It is found in the cell membrane. The protein localises to the postsynaptic cell membrane. It localises to the postsynaptic density membrane. It carries out the reaction Ca(2+)(in) = Ca(2+)(out). The enzyme catalyses Na(+)(in) = Na(+)(out). Ionotropic glutamate receptor that functions as a ligand-gated cation channel, gated by L-glutamate and glutamatergic agonists such as alpha-amino-3-hydroxy-5-methyl-4-isoxazolepropionic acid (AMPA), quisqualic acid, and kainic acid. L-glutamate acts as an excitatory neurotransmitter at many synapses in the central nervous system and plays an important role in fast excitatory synaptic transmission. Binding of the excitatory neurotransmitter L-glutamate induces a conformation change, leading to the opening of the cation channel, and thereby converts the chemical signal to an electrical impulse upon entry of monovalent and divalent cations such as sodium and calcium. The receptor then desensitizes rapidly and enters in a transient inactive state, characterized by the presence of bound agonist. In the presence of CACNG4 or CACNG7 or CACNG8, shows resensitization which is characterized by a delayed accumulation of current flux upon continued application of L-glutamate. Through complex formation with NSG1, GRIP1 and STX12 controls the intracellular fate of AMPAR and the endosomal sorting of the GRIA2 subunit toward recycling and membrane targeting. The polypeptide is Glutamate receptor 2 (Mus musculus (Mouse)).